The sequence spans 455 residues: Ribulose bisphosphate carboxylase large chain (455 aa).

K5 bears the N6,N6,N6-trimethyllysine mark. The substrate site is built by N114 and T164. Catalysis depends on K166, which acts as the Proton acceptor. K168 is a substrate binding site. K192, D194, and E195 together coordinate Mg(2+). At K192 the chain carries N6-carboxylysine. The Proton acceptor role is filled by H285. Substrate contacts are provided by R286, H318, and S370.

It belongs to the RuBisCO large chain family. Type I subfamily. Heterohexadecamer of 8 large chains and 8 small chains; disulfide-linked. The disulfide link is formed within the large subunit homodimers. The cofactor is Mg(2+). The disulfide bond which can form in the large chain dimeric partners within the hexadecamer appears to be associated with oxidative stress and protein turnover.

The protein resides in the plastid. It localises to the chloroplast. It catalyses the reaction 2 (2R)-3-phosphoglycerate + 2 H(+) = D-ribulose 1,5-bisphosphate + CO2 + H2O. The enzyme catalyses D-ribulose 1,5-bisphosphate + O2 = 2-phosphoglycolate + (2R)-3-phosphoglycerate + 2 H(+). Its function is as follows. RuBisCO catalyzes two reactions: the carboxylation of D-ribulose 1,5-bisphosphate, the primary event in carbon dioxide fixation, as well as the oxidative fragmentation of the pentose substrate in the photorespiration process. Both reactions occur simultaneously and in competition at the same active site. This is Ribulose bisphosphate carboxylase large chain from Lupinus latifolius (Broad-leaved lupine).